The primary structure comprises 641 residues: Transcription termination factor MTERF2, chloroplastic (641 aa).

Disordered regions lie at residues 54 to 80 (LKLN…DLDG) and 606 to 641 (FEAG…DLTE). Acidic residues predominate over residues 610 to 641 (LDSEDSQPSDENISDQEIAFSDEAEEEEDLTE).

This sequence belongs to the mTERF family.

Its subcellular location is the plastid. The protein localises to the chloroplast. Transcription termination factor involved in processing of plastid transcripts. Essential for embryogenesis. The sequence is that of Transcription termination factor MTERF2, chloroplastic from Arabidopsis thaliana (Mouse-ear cress).